Here is a 541-residue protein sequence, read N- to C-terminus: Chaperonin GroEL (541 aa).

Residues threonine 29–proline 32, aspartate 86–threonine 90, glycine 413, asparagine 478–alanine 480, and aspartate 494 contribute to the ATP site.

Belongs to the chaperonin (HSP60) family. In terms of assembly, forms a cylinder of 14 subunits composed of two heptameric rings stacked back-to-back. Interacts with the co-chaperonin GroES.

The protein localises to the cytoplasm. The enzyme catalyses ATP + H2O + a folded polypeptide = ADP + phosphate + an unfolded polypeptide.. Together with its co-chaperonin GroES, plays an essential role in assisting protein folding. The GroEL-GroES system forms a nano-cage that allows encapsulation of the non-native substrate proteins and provides a physical environment optimized to promote and accelerate protein folding. In Oenococcus oeni (strain ATCC BAA-331 / PSU-1), this protein is Chaperonin GroEL.